A 184-amino-acid chain; its full sequence is MPSNSGDDNVLQVLIKNFDVLALPLVTLVYPLYASVKAIETRSLPEDEQWLTYWVLYALISLFELTFSKPLEWFPIWPYMKLFGICWLVLPQFNGAEHIYKHFIRPFYRDPQRATTKIWYVPHKKFNFFPKRDDDDILTAAEKYMEQHGTEAFERMIVKKDSYERGRSSRGINNHMIFDDDYRY.

3 helical membrane passes run 13-33, 51-71, and 73-93; these read VLIKNFDVLALPLVTLVYPLY, LTYWVLYALISLFELTFSKPL, and WFPIWPYMKLFGICWLVLPQF.

It belongs to the DP1 family. In terms of tissue distribution, predominantly expressed in flower buds and stem.

The protein resides in the membrane. This chain is HVA22-like protein c (HVA22C), found in Arabidopsis thaliana (Mouse-ear cress).